A 69-amino-acid chain; its full sequence is Photosystem I reaction center subunit IV (69 aa).

This sequence belongs to the PsaE family.

Its subcellular location is the cellular thylakoid membrane. Functionally, stabilizes the interaction between PsaC and the PSI core, assists the docking of the ferredoxin to PSI and interacts with ferredoxin-NADP oxidoreductase. The protein is Photosystem I reaction center subunit IV of Prochlorococcus marinus (strain MIT 9515).